The sequence spans 984 residues: Mediator of RNA polymerase II transcription subunit 5 (984 aa).

This sequence belongs to the Mediator complex subunit 5 family. As to quaternary structure, component of the Mediator complex.

The protein localises to the nucleus. In terms of biological role, component of the Mediator complex, a coactivator involved in the regulated transcription of nearly all RNA polymerase II-dependent genes. Mediator functions as a bridge to convey information from gene-specific regulatory proteins to the basal RNA polymerase II transcription machinery. Mediator is recruited to promoters by direct interactions with regulatory proteins and serves as a scaffold for the assembly of a functional preinitiation complex with RNA polymerase II and the general transcription factors. The sequence is that of Mediator of RNA polymerase II transcription subunit 5 (NUT1) from Phaeosphaeria nodorum (strain SN15 / ATCC MYA-4574 / FGSC 10173) (Glume blotch fungus).